A 262-amino-acid chain; its full sequence is Glutamate 5-kinase (262 aa).

Lysine 14 is a binding site for ATP. Substrate is bound by residues serine 54, aspartate 141, and asparagine 153. ATP-binding positions include 173–174 and 214–220; these read SD and TGGMVTK.

It belongs to the glutamate 5-kinase family.

It localises to the cytoplasm. It catalyses the reaction L-glutamate + ATP = L-glutamyl 5-phosphate + ADP. It functions in the pathway amino-acid biosynthesis; L-proline biosynthesis; L-glutamate 5-semialdehyde from L-glutamate: step 1/2. Functionally, catalyzes the transfer of a phosphate group to glutamate to form L-glutamate 5-phosphate. The protein is Glutamate 5-kinase of Symbiobacterium thermophilum (strain DSM 24528 / JCM 14929 / IAM 14863 / T).